Consider the following 628-residue polypeptide: Beta-galactosidase large subunit (628 aa).

Catalysis depends on E468, which acts as the Proton donor. Residue E536 is the Nucleophile of the active site.

Belongs to the glycosyl hydrolase 2 family. In terms of assembly, heterodimer of a large (LacL) and a small subunit (LacM).

The enzyme catalyses Hydrolysis of terminal non-reducing beta-D-galactose residues in beta-D-galactosides.. Component of a beta-galactosidase. In Lactobacillus acidophilus (strain ATCC 700396 / NCK56 / N2 / NCFM), this protein is Beta-galactosidase large subunit (lacL).